The sequence spans 345 residues: Myb/SANT-like DNA-binding domain-containing protein 4 (345 aa).

The Myb-like domain occupies 4 to 77 (LKRKRKSNFS…EVKRRYLDWR (74 aa)). A Glycyl lysine isopeptide (Lys-Gly) (interchain with G-Cter in SUMO2) cross-link involves residue K9. S106 is subject to Phosphoserine. Glycyl lysine isopeptide (Lys-Gly) (interchain with G-Cter in SUMO2) cross-links involve residues K114 and K142. The tract at residues 141 to 175 (VKVEEEERDPQSPEFEIEEEEEMLSSVIPDSRREN) is disordered. Residue T188 is modified to Phosphothreonine. A coiled-coil region spans residues 202–344 (HLLMNIEKQK…RLRIQKEGHL (143 aa)). Glycyl lysine isopeptide (Lys-Gly) (interchain with G-Cter in SUMO2) cross-links involve residues K237, K254, and K273.

This is Myb/SANT-like DNA-binding domain-containing protein 4 (Msantd4) from Rattus norvegicus (Rat).